A 396-amino-acid chain; its full sequence is Lysophospholipid transporter LplT (396 aa).

At 1–17 (MSESVHTNTSLWSKGMK) the chain is on the periplasmic side. Residues 18–38 (AVIVAQFLSAFGDNALLFATL) form a helical membrane-spanning segment. Residues 39 to 52 (ALLKAQFYPEWSQP) are Cytoplasmic-facing. The helical transmembrane segment at 53–73 (ILQMVFVGAYILLAPFVGQVA) threads the bilayer. The Periplasmic segment spans residues 74-90 (DSFAKGRVMMFANGLKL). The chain crosses the membrane as a helical span at residues 91–111 (LGAASICFGINPFLGYTLVGV). The Cytoplasmic segment spans residues 112–144 (GAAAYSPAKYGILGELTTGSKLVKANGLMEASA). The chain crosses the membrane as a helical span at residues 145 to 165 (IAAILLGSVAGGVLADWHVLV). Residue alanine 166 is a topological domain, periplasmic. Residues 167–187 (LAACALAYGGAVVANIYIPKL) traverse the membrane as a helical segment. Residues 188–225 (AARPGQSWNLINMTRSFLNACTSLWCNGETRFSLVGTS) are Cytoplasmic-facing. A helical transmembrane segment spans residues 226 to 246 (LFWGAGVTLRFLLVLWVPVAL). Over 247 to 255 (GITDNATPT) the chain is Periplasmic. Residues 256–276 (YLNAMVAIGIVVGAGAAAKLV) traverse the membrane as a helical segment. Over 277–279 (TLE) the chain is Cytoplasmic. Residues 280-300 (TVSRCMPAGILIGVVVPIFSL) traverse the membrane as a helical segment. At 301–303 (QHE) the chain is on the periplasmic side. The chain crosses the membrane as a helical span at residues 304–324 (LLPAYALLMLIGVLGGFFVVP). At 325–342 (LNALLQERGKKSVGAGNA) the chain is on the cytoplasmic side. A helical membrane pass occupies residues 343–363 (IAVQNLGENSAMLLMLGIYSL). Residues 364–365 (AV) are Periplasmic-facing. A helical transmembrane segment spans residues 366-386 (MVGIPVVPIGIGFGALFALAI). Topologically, residues 387-396 (TALWIWQRRH) are cytoplasmic.

The protein belongs to the major facilitator superfamily. LplT (TC 2.A.1.42) family.

The protein resides in the cell inner membrane. Its function is as follows. Catalyzes the facilitated diffusion of 2-acyl-glycero-3-phosphoethanolamine (2-acyl-GPE) into the cell. The protein is Lysophospholipid transporter LplT of Shigella flexneri.